A 477-amino-acid chain; its full sequence is Glycogen synthase (477 aa).

Lysine 15 contacts ADP-alpha-D-glucose.

The protein belongs to the glycosyltransferase 1 family. Bacterial/plant glycogen synthase subfamily.

The catalysed reaction is [(1-&gt;4)-alpha-D-glucosyl](n) + ADP-alpha-D-glucose = [(1-&gt;4)-alpha-D-glucosyl](n+1) + ADP + H(+). Its pathway is glycan biosynthesis; glycogen biosynthesis. In terms of biological role, synthesizes alpha-1,4-glucan chains using ADP-glucose. This is Glycogen synthase from Shigella sonnei (strain Ss046).